A 955-amino-acid polypeptide reads, in one-letter code: Leucine--tRNA ligase (955 aa).

The 'HIGH' region signature appears at Pro-51–His-61. The short motif at Lys-647 to Ser-651 is the 'KMSKS' region element. Residue Lys-650 coordinates ATP.

It belongs to the class-I aminoacyl-tRNA synthetase family.

The protein resides in the cytoplasm. It carries out the reaction tRNA(Leu) + L-leucine + ATP = L-leucyl-tRNA(Leu) + AMP + diphosphate. The protein is Leucine--tRNA ligase of Methanococcus maripaludis (strain DSM 14266 / JCM 13030 / NBRC 101832 / S2 / LL).